The sequence spans 127 residues: Protein yippee-like 4 (127 aa).

The Yippee domain maps to 27 to 124; it reads RTYSCVHCRA…IEMSHMVKDN (98 aa). Positions 31, 34, 87, and 90 each coordinate Zn(2+). Phosphothreonine is present on residues T92 and T93. At Y98 the chain carries Phosphotyrosine.

This sequence belongs to the yippee family.

Its subcellular location is the nucleus. The protein localises to the nucleolus. This Chlorocebus aethiops (Green monkey) protein is Protein yippee-like 4 (YPEL4).